Reading from the N-terminus, the 452-residue chain is Phosphoglucosamine mutase (452 aa).

The active-site Phosphoserine intermediate is the Ser-104. Mg(2+) contacts are provided by Ser-104, Asp-241, Asp-243, and Asp-245. Ser-104 bears the Phosphoserine mark.

It belongs to the phosphohexose mutase family. The cofactor is Mg(2+). In terms of processing, activated by phosphorylation.

The catalysed reaction is alpha-D-glucosamine 1-phosphate = D-glucosamine 6-phosphate. Catalyzes the conversion of glucosamine-6-phosphate to glucosamine-1-phosphate. The polypeptide is Phosphoglucosamine mutase (Arthrobacter sp. (strain FB24)).